Here is an 89-residue protein sequence, read N- to C-terminus: Small ribosomal subunit protein uS15 (89 aa).

Belongs to the universal ribosomal protein uS15 family. In terms of assembly, part of the 30S ribosomal subunit. Forms a bridge to the 50S subunit in the 70S ribosome, contacting the 23S rRNA.

Functionally, one of the primary rRNA binding proteins, it binds directly to 16S rRNA where it helps nucleate assembly of the platform of the 30S subunit by binding and bridging several RNA helices of the 16S rRNA. Its function is as follows. Forms an intersubunit bridge (bridge B4) with the 23S rRNA of the 50S subunit in the ribosome. The polypeptide is Small ribosomal subunit protein uS15 (Janthinobacterium sp. (strain Marseille) (Minibacterium massiliensis)).